Reading from the N-terminus, the 29-residue chain is Toxin Bl-4 (29 aa).

This sequence belongs to the long (4 C-C) scorpion toxin superfamily. Sodium channel inhibitor family. Beta subfamily. As to expression, expressed by the venom gland.

The protein localises to the secreted. Functionally, excitatory insect beta-toxins induce a spastic paralysis. They bind voltage-independently at site-4 of sodium channels (Nav) and shift the voltage of activation toward more negative potentials thereby affecting sodium channel activation and promoting spontaneous and repetitive firing. The fraction to which this protein belongs exhibits low toxicity and induces transient paralysis in all insects tested (the crickets A.domesticus). In Buthacus leptochelys (Egyptian fat-tailed scorpion), this protein is Toxin Bl-4.